Consider the following 311-residue polypeptide: Malate dehydrogenase (311 aa).

Residues Gly7–Gly13 and Asp34 each bind NAD(+). Residues Arg81 and Arg87 each contribute to the substrate site. Residues Asn94 and Ile117–Asn119 each bind NAD(+). Residues Asn119 and Arg153 each coordinate substrate. Residue His177 is the Proton acceptor of the active site. Met227 provides a ligand contact to NAD(+).

Belongs to the LDH/MDH superfamily. MDH type 1 family. As to quaternary structure, homodimer.

The enzyme catalyses (S)-malate + NAD(+) = oxaloacetate + NADH + H(+). Its function is as follows. Catalyzes the reversible oxidation of malate to oxaloacetate. In Shewanella piezotolerans (strain WP3 / JCM 13877), this protein is Malate dehydrogenase.